Here is a 481-residue protein sequence, read N- to C-terminus: tRNA pseudouridine(38/39) synthase (481 aa).

Alanine 2 carries the N-acetylalanine modification. Positions 29–41 (KKEQAKNKEDSNI) are enriched in basic and acidic residues. Positions 29–50 (KKEQAKNKEDSNIRENSAGAGK) are disordered. The Nucleophile role is filled by aspartate 118. Substrate is bound at residue tyrosine 195. Residues threonine 456, threonine 466, and threonine 468 each carry the phosphothreonine modification.

Belongs to the tRNA pseudouridine synthase TruA family.

The protein localises to the nucleus. The enzyme catalyses uridine(38/39) in tRNA = pseudouridine(38/39) in tRNA. Its function is as follows. Formation of pseudouridine at position 39 in the anticodon stem and loop of transfer RNAs. The sequence is that of tRNA pseudouridine(38/39) synthase (PUS3) from Homo sapiens (Human).